The chain runs to 490 residues: Calcium-dependent protein kinase 12 (490 aa).

The Protein kinase domain occupies 22 to 280; it reads YFLGQVLGQG…AHQVLCHPWI (259 aa). Residues 28–36 and Lys-51 contribute to the ATP site; that span reads LGQGQFGTT. Asp-146 functions as the Proton acceptor in the catalytic mechanism. Phosphoserine is present on Ser-186. Residues 286–316 are autoinhibitory domain; the sequence is APDKPLDCAVVSRLKKFSAMNKLKKMALRVI. 4 EF-hand domains span residues 323 to 358, 359 to 394, 395 to 430, and 434 to 464; these read EEIG…VGSE, LMES…LNKL, EREE…FGIN, and LDEM…GNGT. Positions 336, 338, 340, 342, 347, 372, 374, 376, 378, 383, 408, 410, 412, 414, 419, 442, 444, 446, 448, and 453 each coordinate Ca(2+).

This sequence belongs to the protein kinase superfamily. Ser/Thr protein kinase family. CDPK subfamily. In terms of assembly, interacts weakly with DI19. Ubiquitously expressed.

The enzyme catalyses L-seryl-[protein] + ATP = O-phospho-L-seryl-[protein] + ADP + H(+). It carries out the reaction L-threonyl-[protein] + ATP = O-phospho-L-threonyl-[protein] + ADP + H(+). With respect to regulation, activated by calcium. Autophosphorylation may play an important role in the regulation of the kinase activity. In terms of biological role, may play a role in signal transduction pathways that involve calcium as a second messenger. In Arabidopsis thaliana (Mouse-ear cress), this protein is Calcium-dependent protein kinase 12 (CPK12).